We begin with the raw amino-acid sequence, 1070 residues long: DNA-directed RNA polymerase subunit beta (1070 aa).

This sequence belongs to the RNA polymerase beta chain family. In plastids the minimal PEP RNA polymerase catalytic core is composed of four subunits: alpha, beta, beta', and beta''. When a (nuclear-encoded) sigma factor is associated with the core the holoenzyme is formed, which can initiate transcription.

The protein localises to the plastid. The enzyme catalyses RNA(n) + a ribonucleoside 5'-triphosphate = RNA(n+1) + diphosphate. In terms of biological role, DNA-dependent RNA polymerase catalyzes the transcription of DNA into RNA using the four ribonucleoside triphosphates as substrates. In Cuscuta exaltata (Tall dodder), this protein is DNA-directed RNA polymerase subunit beta.